The chain runs to 1048 residues: MDGAVRGQGCVGRLRSFNKTKKKNRNCSDDMRNGDDEEKKYSHHDMKNNLRNDANEEKRKSSDDMRDGDFEEKKKCSRHDMKKNLRNDANEEKRKSSDDMRDGDDEEKKCSRQDMKKNLRNDADEEKRKSSDDMRDGDDEEKKKRSRHDMKKNSRNDADEEKRKRKRKCSDDLKKSVVNDASKEATSHSDWRKNRKAGSDAEQRGKKLLNGDKKAKSRKVTTPFFEKMRKIKMQRTSNQNGEKNMKSDGDSYKKTVPLSVNKGKMEKDGTNKRTLSNTLVAKERKMRPSDSMEMKMKKKKRDASFVQPDERTAQTFSTKNKEKKRKAPSTPLKREQKERVASSDNKKETKKACIVAIGNEKKNCRDGKKKKRKAAFAFFKFVRDEFEELLFIPPAVAPSLKDLIDRHVYLEDSEGKCSKIRLSVVDGSLAFYEGWNSFVSEHCIKWGEFLLFEYTPESTFSVRVFGIDSCERLHFSVKSGGKGAVKKRKERHTLSDDLISHYNGQYQDSEDIHDGPNVSGESPRSKEPKITVDAEIGTRNLVAKSINAASETQDSERVESGIGYGSLGALGNKVRNLSNGECDTRSDSVFCIQEKTRRSEVIIISDEAYSTQVDEDTMKQTAPSEASEIHHVTINTQKDLERVVDGVCCESSVALNNKMGNLILGEPKNKNISPACSTEKTNGSEITPTTGVIPLTQENIDTVKLNTLSCFEEDRSTTRESELAAAIPTTSETHDSDKDLGQKHQRNSVQVNSIIAVDKYPNDSEMNISGNIFRIYEAPAGTRCLEKWKRGIVNGRAALDDIGQVRPEKTQKAGEKLVGNCGAMGESPVDLRIESDVTDTCLKPILNIPIEELSILDSVSISKCGRSRTEVNHLFNQKGATVQLQTKKEPLKPTGSSGNRKGDKIAVSVNRVFAHQSELQIPQQENGNFTSCVTPVALLPAKAELLDLDDHSLQFCIPSTIQKWLELPKSLPITCRQKGRYDRNVVILKDPMRRLWPVFYHDKPVFVGFTAGWKPFAAANNLQAGDVCKFVKEMDEDELAFQVYITRK.

The tract at residues Met1–Asn345 is disordered. Basic residues predominate over residues Ser16–Arg25. 6 stretches are compositionally biased toward basic and acidic residues: residues Asn26–Met134, Lys151–Lys162, Cys169–Lys214, Lys243–Lys253, Ala281–Lys295, and Leu332–Asn345. A DNA-binding region (TF-B3 1) is located at residues Ala375–Asp468. The tract at residues Gln505–Pro528 is disordered. Positions Leu953–Lys1048 form a DNA-binding region, TF-B3 2.

The protein localises to the nucleus. This is B3 domain-containing protein Os02g0598200 from Oryza sativa subsp. japonica (Rice).